A 268-amino-acid polypeptide reads, in one-letter code: Thiazole synthase (268 aa).

The active-site Schiff-base intermediate with DXP is Lys-100. 1-deoxy-D-xylulose 5-phosphate-binding positions include Gly-161, 187-188 (AG), and 209-210 (NT). The disordered stretch occupies residues 248-268 (ASPSSPAEGMFTGTQHPAANS). Positions 259–268 (TGTQHPAANS) are enriched in polar residues.

This sequence belongs to the ThiG family. As to quaternary structure, homotetramer. Forms heterodimers with either ThiH or ThiS.

The protein resides in the cytoplasm. It catalyses the reaction [ThiS sulfur-carrier protein]-C-terminal-Gly-aminoethanethioate + 2-iminoacetate + 1-deoxy-D-xylulose 5-phosphate = [ThiS sulfur-carrier protein]-C-terminal Gly-Gly + 2-[(2R,5Z)-2-carboxy-4-methylthiazol-5(2H)-ylidene]ethyl phosphate + 2 H2O + H(+). Its pathway is cofactor biosynthesis; thiamine diphosphate biosynthesis. Its function is as follows. Catalyzes the rearrangement of 1-deoxy-D-xylulose 5-phosphate (DXP) to produce the thiazole phosphate moiety of thiamine. Sulfur is provided by the thiocarboxylate moiety of the carrier protein ThiS. In vitro, sulfur can be provided by H(2)S. The chain is Thiazole synthase from Nitrosomonas europaea (strain ATCC 19718 / CIP 103999 / KCTC 2705 / NBRC 14298).